Reading from the N-terminus, the 556-residue chain is MKLFLTQSANVGDVKAYLLHEVFRAAAQKANVSIVGTPAEADLVLVFGSVLPNNPDLVGKKVFIIGEAIAMISPEVTLANALANGADYVAPKSAVSFTGVSGVKNIVAVTACPTGVAHTFMSAEAIEAYAKKQGWNVKVETRGQVGAGNEITVEEVAAADLVFVAADIDVPLDKFKGKPMYRTSTGLALKKTEQEFDKAFKEAKIFDGGNNAGTKEESREKKGVYKHLMTGVSHMLPLVVAGGLLIAISFMFSFNVIENTGVFQDLPNMLINIGSGVAFKLMIAVFAGYVAFSIADRPGLAVGLIAGMLASEAGAGILGGIIAGFLAGYVVKGLNVIIRLPASLTSLKPILILPLLGSMIVGLTMIYLINPPVAEIMKELSNWLTSMGEVNAIVLGAIIGAMMCIDMGGPVNKAAYTFSVGLIASQVYTPMAAAMAAGMVPPIGMTVATWIARNKFTVSQCDAGKASFVLGLCFISEGALPFVAADPIRVIISSVIGGAVAGAISMGLNITLQAPHGGLFVIPFVSEPLKYLGAIAIGALSTGVVYAIIKSKNNAE.

PTS EIIB type-2 domains are found at residues 1-85 (MKLF…LANG) and 106-201 (IVAV…KAFK). Cys112 functions as the Phosphocysteine intermediate; for EIIB activity in the catalytic mechanism. Position 112 is a phosphocysteine; by EIIA (Cys112). The PTS EIIC type-2 domain occupies 224–556 (VYKHLMTGVS…AIIKSKNNAE (333 aa)). 10 helical membrane-spanning segments follow: residues 237–257 (PLVVAGGLLIAISFMFSFNVI), 275–295 (SGVAFKLMIAVFAGYVAFSIA), 302–322 (VGLIAGMLASEAGAGILGGII), 324–344 (GFLAGYVVKGLNVIIRLPASL), 349–369 (PILILPLLGSMIVGLTMIYLI), 390–410 (VNAIVLGAIIGAMMCIDMGGP), 431–451 (MAAAMAAGMVPPIGMTVATWI), 468–488 (FVLGLCFISEGALPFVAADPI), 490–510 (VIISSVIGGAVAGAISMGLNI), and 529–549 (LKYLGAIAIGALSTGVVYAII).

Its subcellular location is the cell inner membrane. It catalyses the reaction D-fructose(out) + N(pros)-phospho-L-histidyl-[protein] = D-fructose 1-phosphate(in) + L-histidyl-[protein]. Functionally, the phosphoenolpyruvate-dependent sugar phosphotransferase system (sugar PTS), a major carbohydrate active transport system, catalyzes the phosphorylation of incoming sugar substrates concomitantly with their translocation across the cell membrane. The enzyme II FruAB PTS system is involved in fructose transport. This Haemophilus influenzae (strain ATCC 51907 / DSM 11121 / KW20 / Rd) protein is PTS system fructose-specific EIIB'BC component.